The sequence spans 94 residues: Small ribosomal subunit protein uS19 (94 aa).

The protein belongs to the universal ribosomal protein uS19 family.

Protein S19 forms a complex with S13 that binds strongly to the 16S ribosomal RNA. The chain is Small ribosomal subunit protein uS19 from Moorella thermoacetica (strain ATCC 39073 / JCM 9320).